We begin with the raw amino-acid sequence, 510 residues long: Dolichyl-P-Man:Man5GlcNAc2-PP-dolichol alpha-1,3-mannosyltransferase Alg3 (510 aa).

The Cytoplasmic segment spans residues 1–43 (MAPPKAASHRPAVRRKKSGTLVDSILDKYLNVRFFKYLLLEPA). The chain crosses the membrane as a helical span at residues 44-64 (ALPIVGLFVLLAELVINVVVI). Residues 65–97 (QRVPYTEIDWVAYMQECEGFLNGTTNYSLLRGD) lie on the Lumenal side of the membrane. The chain crosses the membrane as a helical span at residues 98–118 (TGPLVYPAAFVYIYSALYYVT). At 119-125 (SHGTNVR) the chain is on the cytoplasmic side. The chain crosses the membrane as a helical span at residues 126 to 146 (LAQYIFAGIYLLQLALVLRLY). Residues 147–171 (SKSRKVPPYVLVLSAFTSYRIHSIY) lie on the Lumenal side of the membrane. Residues 172–192 (VLRLFNDPVAVLLLYAALNLF) traverse the membrane as a helical segment. The Cytoplasmic portion of the chain corresponds to 193–211 (LDRRWTLGSTFFSLAVGVK). Residues 212 to 232 (MNILLFAPALLLFYLANLGLL) traverse the membrane as a helical segment. A topological domain (lumenal) is located at residue arginine 233. A helical membrane pass occupies residues 234–254 (TILQLAVCGVIQLLLGAPFLL). At 255-294 (THPVEYLRGSFDLGRIFEHKWTVNYRFLSRDVFENRTFHV) the chain is on the cytoplasmic side. A helical membrane pass occupies residues 295–315 (SLLGLHLLLLLAFAKPIWTFF). Topologically, residues 316–403 (QSYVRLRRIE…YGIHFDRCTQ (88 aa)) are lumenal. Residues 337 to 358 (LQLKAQKRPKKVEKDKDKDQKK) form a disordered region. The segment covering 348-358 (VEKDKDKDQKK) has biased composition (basic and acidic residues). The helical transmembrane segment at 404–424 (LALLPFFLCNLVGVACSRSLH) threads the bilayer. At 425–426 (YQ) the chain is on the cytoplasmic side. A helical transmembrane segment spans residues 427–447 (FYVWYFHSLPYLAWSTPYSLG). Over 448-464 (VRCLILGLIEYCWNTYP) the chain is Lumenal. Residues 465–485 (STNFSSAALHFTHIILLAGVA) traverse the membrane as a helical segment. Over 486-510 (KQLIQTMRINNAAKREQQEQQKKLQ) the chain is Cytoplasmic.

Belongs to the glycosyltransferase ALG3 family.

Its subcellular location is the endoplasmic reticulum membrane. It catalyses the reaction an alpha-D-Man-(1-&gt;2)-alpha-D-Man-(1-&gt;2)-alpha-D-Man-(1-&gt;3)-[alpha-D-Man-(1-&gt;6)]-beta-D-Man-(1-&gt;4)-beta-D-GlcNAc-(1-&gt;4)-alpha-D-GlcNAc-diphospho-di-trans,poly-cis-dolichol + a di-trans,poly-cis-dolichyl beta-D-mannosyl phosphate = an alpha-D-Man-(1-&gt;2)-alpha-D-Man-(1-&gt;2)-alpha-D-Man-(1-&gt;3)-[alpha-D-Man-(1-&gt;3)-alpha-D-Man-(1-&gt;6)]-beta-D-Man-(1-&gt;4)-beta-D-GlcNAc-(1-&gt;4)-alpha-D-GlcNAc-diphospho-di-trans,poly-cis-dolichol + a di-trans,poly-cis-dolichyl phosphate + H(+). Its pathway is protein modification; protein glycosylation. Its function is as follows. Probable alpha-1,3-mannosyltransferase involved in the N-glycosylation pathway. Involved in glycosylation of the TNF receptor grnd, regulating its ligand affinity. Required for normal epithelial growth and architecture. Suppressor of JNK-dependent intestinal stem cell proliferation. This chain is Dolichyl-P-Man:Man5GlcNAc2-PP-dolichol alpha-1,3-mannosyltransferase Alg3, found in Drosophila melanogaster (Fruit fly).